Reading from the N-terminus, the 527-residue chain is FAD-dependent monooxygenase CTB5 (527 aa).

One can recognise an FAD-binding PCMH-type domain in the interval 78–255 (SDLHPSCIAL…TAVTLKTFGQ (178 aa)).

Belongs to the oxygen-dependent FAD-linked oxidoreductase family.

Its pathway is mycotoxin biosynthesis. FAD-dependent monooxygenase; part of the gene cluster that mediates the biosynthesis of cercosporin, a light-activated, non-host-selective toxin. The perylenequinone chromophore of cercosporin absorbs light energy to attain an electronically-activated triplet state and produces active oxygen species such as the hydroxyl radical, superoxide, hydrogen peroxide or singlet oxygen upon reaction with oxygen molecules. These reactive oxygen species cause damage to various cellular components including lipids, proteins and nucleic acids. The first step of cercosporin biosynthesis is performed by the polyketide synthase CTB1 which catalyzes the formation of nor-toralactone. The starter unit acyltransferase (SAT) domain of CTB1 initiates polyketide extension by the selective utilization of acetyl-CoA, which is elongated to the heptaketide in the beta-ketoacyl synthase (KS) domain by successive condensations with six malonyl units introduced by the malonyl acyltransferase (MAT) domain. The product template (PT) domain catalyzes C4-C9 and C2-C11 aldol cyclizations and dehydrations to a trihydroxynaphthalene, which is thought to be delivered to the thioesterase (TE) domain for product release. The bifunctional enzyme CTB3 then methylates nor-toralactone to toralactone before conducting an unusual oxidative aromatic ring opening. The O-methyltransferase CTB2 further methylates the nascent OH-6 of the CBT3 product, blocking further oxidation at this site before the reductase CTB6 reduces the 2-oxopropyl ketone at position C7, giving naphthalene. The FAD-dependent monooxygenase CTB5 in concert with the multicopper oxidase CTB12 are responsible for homodimerization of naphthalene with CTB7 installing the dioxepine moiety, finally producing cercosporin. The fasciclin domain-containing protein CTB11 might act with CTB5 and CTB12 whereas the roles of CTB9 and CTB10 have still to be elucidated. The sequence is that of FAD-dependent monooxygenase CTB5 from Cercospora beticola (Sugarbeet leaf spot fungus).